Here is a 112-residue protein sequence, read N- to C-terminus: uncharacterized protein (112 aa).

Over residues 1-11 (MAESVASSESL) the composition is skewed to polar residues. The tract at residues 1–32 (MAESVASSESLPQMKPEEPESKKSPSREAIPK) is disordered. The segment covering 15–31 (KPEEPESKKSPSREAIP) has biased composition (basic and acidic residues). The chain crosses the membrane as a helical span at residues 81–101 (VVFIFMIAIMSMLVIGLVVCG).

It is found in the membrane. This is an uncharacterized protein from Encephalitozoon cuniculi (strain GB-M1) (Microsporidian parasite).